Here is a 273-residue protein sequence, read N- to C-terminus: Imidazole glycerol phosphate synthase subunit HisF (273 aa).

Catalysis depends on residues Asp-12 and Asp-136.

The protein belongs to the HisA/HisF family. Heterodimer of HisH and HisF.

It localises to the cytoplasm. The enzyme catalyses 5-[(5-phospho-1-deoxy-D-ribulos-1-ylimino)methylamino]-1-(5-phospho-beta-D-ribosyl)imidazole-4-carboxamide + L-glutamine = D-erythro-1-(imidazol-4-yl)glycerol 3-phosphate + 5-amino-1-(5-phospho-beta-D-ribosyl)imidazole-4-carboxamide + L-glutamate + H(+). Its pathway is amino-acid biosynthesis; L-histidine biosynthesis; L-histidine from 5-phospho-alpha-D-ribose 1-diphosphate: step 5/9. In terms of biological role, IGPS catalyzes the conversion of PRFAR and glutamine to IGP, AICAR and glutamate. The HisF subunit catalyzes the cyclization activity that produces IGP and AICAR from PRFAR using the ammonia provided by the HisH subunit. This is Imidazole glycerol phosphate synthase subunit HisF from Halobacterium salinarum (strain ATCC 29341 / DSM 671 / R1).